A 120-amino-acid polypeptide reads, in one-letter code: uncharacterized protein (120 aa).

This is an uncharacterized protein from Archaeoglobus fulgidus (strain ATCC 49558 / DSM 4304 / JCM 9628 / NBRC 100126 / VC-16).